A 258-amino-acid chain; its full sequence is Axonemal dynein light intermediate polypeptide 1 (258 aa).

Disordered regions lie at residues 1–60 (MIPP…CVPD) and 202–231 (DLER…EEKK). A coiled-coil region spans residues 176-255 (MRKALQAEQG…LKAQLEGIIA (80 aa)).

The protein belongs to the inner dynein arm light chain family. In terms of assembly, interacts with CFAP45. Interacts with DYNC1H1.

Its subcellular location is the cell projection. The protein localises to the cilium. It is found in the flagellum. The protein resides in the dynein axonemal particle. It localises to the cytoplasm. In terms of biological role, involved in sperm flagellum assembly. In Rattus norvegicus (Rat), this protein is Axonemal dynein light intermediate polypeptide 1.